The following is a 656-amino-acid chain: Translation factor GUF1, mitochondrial (656 aa).

Residues 1–28 (MWKGLLQSTRAAWRGPCVRAPRLPFFRR) constitute a mitochondrion transit peptide. The tr-type G domain occupies 55-235 (ERYRNFSIVA…NVIENIPGPD (181 aa)). Residues 64–71 (AHVDHGKS), 128–132 (DTPGH), and 182–185 (NKID) each bind GTP.

This sequence belongs to the TRAFAC class translation factor GTPase superfamily. Classic translation factor GTPase family. LepA subfamily.

It is found in the mitochondrion inner membrane. It carries out the reaction GTP + H2O = GDP + phosphate + H(+). In terms of biological role, promotes mitochondrial protein synthesis. May act as a fidelity factor of the translation reaction, by catalyzing a one-codon backward translocation of tRNAs on improperly translocated ribosomes. Binds to mitochondrial ribosomes in a GTP-dependent manner. This is Translation factor GUF1, mitochondrial from Yarrowia lipolytica (strain CLIB 122 / E 150) (Yeast).